Consider the following 677-residue polypeptide: Pentatricopeptide repeat-containing protein At5g39350 (677 aa).

PPR repeat units follow at residues 48–78, 79–113, 116–146, 151–181, 182–216, 217–251, 252–282, 283–317, 318–352, 353–383, 384–418, 419–453, 454–488, 489–523, 524–554, and 560–590; these read SGHI…MPQS, SLLS…GVKC, DGYT…ILRS, DKYV…MKNR, DVIS…SVDL, DHAT…RLGD, KIEV…MERR, DVIT…GVRP, NAVT…QVYS, DIII…ASKY, HTGP…DVEP, NIAT…GFMS, SLDA…HKSK, DVVL…GVTP, NEIT…MLEH, and RSNH…IPFE. A type E motif region spans residues 595–670; the sequence is VWGALLAACV…KPGHSTIEIR (76 aa).

Belongs to the PPR family. PCMP-E subfamily.

In Arabidopsis thaliana (Mouse-ear cress), this protein is Pentatricopeptide repeat-containing protein At5g39350 (PCMP-E16).